The primary structure comprises 69 residues: Cytochrome c oxidase subunit 8A, mitochondrial (69 aa).

A mitochondrion-targeting transit peptide spans 1–25; sequence MSVLTPLLLRGLTGPARRLPVPRAQ. Positions 2–19 match the SIFI-degron motif; it reads SVLTPLLLRGLTGPARRL. Residues 26 to 36 are Mitochondrial matrix-facing; it reads IHSKPPREQLG. A helical membrane pass occupies residues 37–60; it reads TMDIAIGLTSCFLCFLLPSGWVLS. Over 61–69 the chain is Mitochondrial intermembrane; it reads HMENYKKRE.

It belongs to the cytochrome c oxidase VIII family. As to quaternary structure, component of the cytochrome c oxidase (complex IV, CIV), a multisubunit enzyme composed of 14 subunits. The complex is composed of a catalytic core of 3 subunits MT-CO1, MT-CO2 and MT-CO3, encoded in the mitochondrial DNA, and 11 supernumerary subunits COX4I1 (or COX4I2), COX5A, COX5B, COX6A2 (or COX6A1), COX6B1 (or COX6B2), COX6C, COX7A1 (or COX7A2), COX7B, COX7C, COX8B and NDUFA4, which are encoded in the nuclear genome. The complex exists as a monomer or a dimer and forms supercomplexes (SCs) in the inner mitochondrial membrane with NADH-ubiquinone oxidoreductase (complex I, CI) and ubiquinol-cytochrome c oxidoreductase (cytochrome b-c1 complex, complex III, CIII), resulting in different assemblies (supercomplex SCI(1)III(2)IV(1) and megacomplex MCI(2)III(2)IV(2)). In response to mitochondrial stress, the precursor protein is ubiquitinated by the SIFI complex in the cytoplasm before mitochondrial import, leading to its degradation. Within the SIFI complex, UBR4 initiates ubiquitin chain that are further elongated or branched by KCMF1.

The protein localises to the mitochondrion inner membrane. It participates in energy metabolism; oxidative phosphorylation. Component of the cytochrome c oxidase, the last enzyme in the mitochondrial electron transport chain which drives oxidative phosphorylation. The respiratory chain contains 3 multisubunit complexes succinate dehydrogenase (complex II, CII), ubiquinol-cytochrome c oxidoreductase (cytochrome b-c1 complex, complex III, CIII) and cytochrome c oxidase (complex IV, CIV), that cooperate to transfer electrons derived from NADH and succinate to molecular oxygen, creating an electrochemical gradient over the inner membrane that drives transmembrane transport and the ATP synthase. Cytochrome c oxidase is the component of the respiratory chain that catalyzes the reduction of oxygen to water. Electrons originating from reduced cytochrome c in the intermembrane space (IMS) are transferred via the dinuclear copper A center (CU(A)) of subunit 2 and heme A of subunit 1 to the active site in subunit 1, a binuclear center (BNC) formed by heme A3 and copper B (CU(B)). The BNC reduces molecular oxygen to 2 water molecules using 4 electrons from cytochrome c in the IMS and 4 protons from the mitochondrial matrix. This chain is Cytochrome c oxidase subunit 8A, mitochondrial (COX8A), found in Bos taurus (Bovine).